We begin with the raw amino-acid sequence, 758 residues long: Vitamin K-dependent gamma-carboxylase (758 aa).

The interval 1–34 (MAVSARPARAPRGSDKVKKDKAAQTSGPRQGSRM) is disordered. An N-acetylalanine modification is found at Ala2. Residues 2 to 60 (AVSARPARAPRGSDKVKKDKAAQTSGPRQGSRMGKLLGFEWTDVSSWERLVTLLNRPTD) are Cytoplasmic-facing. A compositionally biased stretch (basic and acidic residues) spans 12–22 (RGSDKVKKDKA). Residues 61-81 (PAGLAVFRFLFGLMMVLDIPQ) traverse the membrane as a helical segment. The Lumenal segment spans residues 82–113 (ERGLSSLDRRYLDGLEVCRFPLLDALQPLPLD). Cys99 and Cys450 are oxidised to a cystine. A helical transmembrane segment spans residues 114-134 (WMYLIYTIMFLGALGMMLGLC). The Cytoplasmic portion of the chain corresponds to 135–136 (YR). The helical transmembrane segment at 137 to 157 (ISCVLFLLPYWYVFLLDKTSW) threads the bilayer. Residues 158-292 (NNHSYLYGLL…VSYFHCMNSQ (135 aa)) are Lumenal-facing. The helical transmembrane segment at 293-313 (LFSIGMFPYVMLASSPLFCSP) threads the bilayer. Topologically, residues 314-363 (EWPRKLVAHCPKKLQELLPLRTAPQPSTSCMYKRSRARGSQKPGLRHKLS) are cytoplasmic. Residues 364-384 (TAFTLLYLLEQLFLPYSHFLT) traverse the membrane as a helical segment. Residues 385–758 (QGYNNWTNGL…PDSHPVHSEF (374 aa)) lie on the Lumenal side of the membrane. The disordered stretch occupies residues 727–758 (PFEPAGEPSPVNTDSSNPNPPEPDSHPVHSEF). Basic and acidic residues predominate over residues 749–758 (PDSHPVHSEF).

In terms of assembly, monomer. May interact with CALU. The N-terminus is blocked.

Its subcellular location is the endoplasmic reticulum membrane. It carries out the reaction 4-carboxy-L-glutamyl-[protein] + 2,3-epoxyphylloquinone + H2O + H(+) = phylloquinol + L-glutamyl-[protein] + CO2 + O2. In terms of biological role, mediates the vitamin K-dependent carboxylation of glutamate residues to calcium-binding gamma-carboxyglutamate (Gla) residues with the concomitant conversion of the reduced hydroquinone form of vitamin K to vitamin K epoxide. Catalyzes gamma-carboxylation of various proteins, such as blood coagulation factors (F2, F7, F9 and F10), osteocalcin (BGLAP) or matrix Gla protein (MGP). In Bos taurus (Bovine), this protein is Vitamin K-dependent gamma-carboxylase (GGCX).